The following is a 187-amino-acid chain: Small ribosomal subunit protein uS5 (187 aa).

The 64-residue stretch at 20–83 folds into the S5 DRBM domain; the sequence is FADRLVAINR…EQAKRQMIRV (64 aa). Residues 155 to 187 form a disordered region; the sequence is KKEQSPRSVAQRRGKKVADILPKRDEAPAEAEA. Over residues 170-181 the composition is skewed to basic and acidic residues; the sequence is KVADILPKRDEA.

Belongs to the universal ribosomal protein uS5 family. In terms of assembly, part of the 30S ribosomal subunit. Contacts proteins S4 and S8.

With S4 and S12 plays an important role in translational accuracy. In terms of biological role, located at the back of the 30S subunit body where it stabilizes the conformation of the head with respect to the body. The polypeptide is Small ribosomal subunit protein uS5 (Ruegeria sp. (strain TM1040) (Silicibacter sp.)).